We begin with the raw amino-acid sequence, 50 residues long: Large ribosomal subunit protein bL33B (50 aa).

This sequence belongs to the bacterial ribosomal protein bL33 family.

The polypeptide is Large ribosomal subunit protein bL33B (Metamycoplasma arthritidis (strain 158L3-1) (Mycoplasma arthritidis)).